Consider the following 368-residue polypeptide: Transcription factor TGA1 (368 aa).

A compositionally biased stretch (polar residues) spans leucine 53–threonine 65. The disordered stretch occupies residues leucine 53–aspartate 83. The 64-residue stretch at proline 82–phenylalanine 145 folds into the bZIP domain. Coiled coils occupy residues aspartate 83–glycine 131 and asparagine 261–glutamine 281. The basic motif stretch occupies residues lysine 84–lysine 104. The segment at leucine 110 to leucine 124 is leucine-zipper. A DOG1 domain is found at isoleucine 153 to arginine 363. A disulfide bridge connects residues cysteine 260 and cysteine 266.

The protein belongs to the bZIP family. As to quaternary structure, binds DNA as a dimer. The reduced form interacts with NPR1. As to expression, predominantly expressed in roots.

The protein localises to the nucleus. Transcriptional activator that binds specifically to the DNA sequence 5'-TGACG-3'. Recognizes ocs elements like the as-1 motif of the cauliflower mosaic virus 35S promoter. Binding to the as-1-like cis elements mediate auxin- and salicylic acid-inducible transcription. May be involved in the induction of the systemic acquired resistance (SAR) via its interaction with NPR1. Could also bind to the Hex-motif (5'-TGACGTGG-3') another cis-acting element found in plant histone promoters. The chain is Transcription factor TGA1 (TGA1) from Arabidopsis thaliana (Mouse-ear cress).